A 492-amino-acid chain; its full sequence is Cytochrome P450 26A1 (492 aa).

Cys-438 lines the heme pocket.

It belongs to the cytochrome P450 family. Requires heme as cofactor.

It localises to the endoplasmic reticulum membrane. Its subcellular location is the microsome membrane. The enzyme catalyses all-trans-retinoate + reduced [NADPH--hemoprotein reductase] + O2 = all-trans-(4S)-hydroxyretinoate + oxidized [NADPH--hemoprotein reductase] + H2O + H(+). In terms of biological role, a cytochrome P450 monooxygenase involved in the metabolism of all-trans retinoic acid (atRA), a signaling molecule that binds to retinoic acid receptors and regulates gene transcription. Mechanistically, uses molecular oxygen inserting one oxygen atom into a substrate, and reducing the second into a water molecule, with two electrons provided by NADPH via cytochrome P450 reductase (CPR; NADPH-ferrihemoprotein reductase). Catalyzes the hydroxylation of carbon hydrogen bonds of atRA primarily at C-4. Has no activity toward 9-cis and 13-cis retinoic acid stereoisomers. May play a role in the oxidative metabolism of xenobiotics such as tazarotenic acid. The polypeptide is Cytochrome P450 26A1 (cyp26a1) (Danio rerio (Zebrafish)).